The chain runs to 961 residues: ATPase 7, plasma membrane-type (961 aa).

At 1 to 64 the chain is on the cytoplasmic side; it reads MTDIEALKAI…EKKESKILKF (64 aa). A helical transmembrane segment spans residues 65-84; that stretch reads LGFMWNPLSWVMEAAALMAI. Over 85–96 the chain is Extracellular; that stretch reads GLAHGGGKPADY. The helical transmembrane segment at 97 to 117 threads the bilayer; that stretch reads HDFVGIVVLLLINSTISFVEE. The Cytoplasmic portion of the chain corresponds to 118 to 246; sequence NNAGNAAAAL…GHFQKVLTAI (129 aa). The chain crosses the membrane as a helical span at residues 247–267; sequence GNFCICSIAVGMAIEIVVIYG. The Extracellular portion of the chain corresponds to 268-276; sequence LQKRGYRVG. Residues 277-294 traverse the membrane as a helical segment; the sequence is IDNLLVLLIGGIPIAMPT. Over 295 to 643 the chain is Cytoplasmic; sequence VLSVTMAIGA…TSRAIFQRMK (349 aa). Aspartate 332 serves as the catalytic 4-aspartylphosphate intermediate. Residues aspartate 588 and aspartate 592 each contribute to the Mg(2+) site. Residues 644 to 665 form a helical membrane-spanning segment; sequence NYTIYAVSITIRIVMGFMLLCV. The Extracellular segment spans residues 666 to 670; sequence FWEFD. A helical transmembrane segment spans residues 671-693; it reads FPPFMVLVIAILNDGTIMTISKD. Residues 694 to 709 lie on the Cytoplasmic side of the membrane; the sequence is RVKPSPTPDCWKLKEI. Residues 710–730 form a helical membrane-spanning segment; the sequence is FATGVVLGAYLAIMTVVFFWA. The Extracellular segment spans residues 731-764; that stretch reads AYETNFFHNIFHVRNFNQHHFKMKDKKVAAHLNE. Residues 765 to 785 form a helical membrane-spanning segment; it reads QMASAVYLQVSTISQALIFVT. At 786–797 the chain is on the cytoplasmic side; sequence RSRSWSFVERPG. Residues 798 to 818 traverse the membrane as a helical segment; it reads FLLVIAFLIAQLVASVISAMA. Topologically, residues 819–826 are extracellular; it reads NWPFAGIR. Residues 827 to 847 form a helical membrane-spanning segment; it reads SIGWGWTGVIWIFNIVTYMLL. At 848 to 961 the chain is on the cytoplasmic side; that stretch reads DPIKFLVRYA…EDPNSNNYTI (114 aa). Position 894 is a phosphothreonine (threonine 894). 2 positions are modified to phosphoserine: serine 910 and serine 942. The segment at 959-961 is interaction with 14-3-3 proteins; that stretch reads YTI. At threonine 960 the chain carries Phosphothreonine.

The protein belongs to the cation transport ATPase (P-type) (TC 3.A.3) family. Type IIIA subfamily. Binds to 14-3-3 proteins. The binding is induced by phosphorylation of Thr-960. Binding to 14-3-3 proteins activates the H(+)-ATPase. As to expression, expressed in guard cells, roots and leaves, and barely in mesophyll cells.

It is found in the membrane. It catalyses the reaction ATP + H2O + H(+)(in) = ADP + phosphate + 2 H(+)(out). Its function is as follows. The plasma membrane H(+) ATPase of plants and fungi generates a proton gradient that drives the active transport of nutrients by H(+)-symport. The resulting external acidification and/or internal alkinization may mediate growth responses. This chain is ATPase 7, plasma membrane-type (AHA7), found in Arabidopsis thaliana (Mouse-ear cress).